Consider the following 192-residue polypeptide: MLKKTLAALALGSALLGAGQAMAADYVIDKEGQHAFVNFKISHLGYSWLYGTFRDFDGSFSFDAAKPEASKVKVNLKTASVDSNHAERDKHIRSADFLNVAKHPTATFESTGVKSTGQDTFDITGNLSLNGVTKPVVIAARFIGEGKDPWGGYRAGFEGGTKLKLKDFGIQKDLGPASQEVDLIISVEGVRQ.

The N-terminal stretch at 1–23 is a signal peptide; sequence MLKKTLAALALGSALLGAGQAMA.

This sequence belongs to the UPF0312 family. Type 1 subfamily.

It is found in the periplasm. The polypeptide is UPF0312 protein Avin_03250 (Azotobacter vinelandii (strain DJ / ATCC BAA-1303)).